The chain runs to 198 residues: dCTP deaminase (198 aa).

DCTP contacts are provided by residues 99–104 (RSSLGR), 125–127 (TLE), and Gln144. The Proton donor/acceptor role is filled by Glu127.

The protein belongs to the dCTP deaminase family. Homotrimer.

The enzyme catalyses dCTP + H2O + H(+) = dUTP + NH4(+). It participates in pyrimidine metabolism; dUMP biosynthesis; dUMP from dCTP (dUTP route): step 1/2. Functionally, catalyzes the deamination of dCTP to dUTP. This is dCTP deaminase from Rhodopirellula baltica (strain DSM 10527 / NCIMB 13988 / SH1).